Here is a 310-residue protein sequence, read N- to C-terminus: Ribosomal protein uL3 glutamine methyltransferase (310 aa).

This sequence belongs to the protein N5-glutamine methyltransferase family. PrmB subfamily.

It carries out the reaction L-glutaminyl-[ribosomal protein uL3] + S-adenosyl-L-methionine = N(5)-methyl-L-glutaminyl-[ribosomal protein uL3] + S-adenosyl-L-homocysteine + H(+). Its function is as follows. Methylates large ribosomal subunit protein uL3 on a specific glutamine residue. This Yersinia pestis protein is Ribosomal protein uL3 glutamine methyltransferase.